The chain runs to 245 residues: 1-(5-phosphoribosyl)-5-[(5-phosphoribosylamino)methylideneamino] imidazole-4-carboxamide isomerase (245 aa).

The active-site Proton acceptor is aspartate 8. Aspartate 129 acts as the Proton donor in catalysis.

This sequence belongs to the HisA/HisF family.

The protein localises to the cytoplasm. The enzyme catalyses 1-(5-phospho-beta-D-ribosyl)-5-[(5-phospho-beta-D-ribosylamino)methylideneamino]imidazole-4-carboxamide = 5-[(5-phospho-1-deoxy-D-ribulos-1-ylimino)methylamino]-1-(5-phospho-beta-D-ribosyl)imidazole-4-carboxamide. Its pathway is amino-acid biosynthesis; L-histidine biosynthesis; L-histidine from 5-phospho-alpha-D-ribose 1-diphosphate: step 4/9. The sequence is that of 1-(5-phosphoribosyl)-5-[(5-phosphoribosylamino)methylideneamino] imidazole-4-carboxamide isomerase from Pelobacter propionicus (strain DSM 2379 / NBRC 103807 / OttBd1).